A 357-amino-acid polypeptide reads, in one-letter code: Uroporphyrinogen decarboxylase (357 aa).

Substrate-binding positions include 27 to 31 (RQAGR), aspartate 77, tyrosine 154, serine 209, and histidine 330.

This sequence belongs to the uroporphyrinogen decarboxylase family. As to quaternary structure, homodimer.

The protein resides in the cytoplasm. The catalysed reaction is uroporphyrinogen III + 4 H(+) = coproporphyrinogen III + 4 CO2. Its pathway is porphyrin-containing compound metabolism; protoporphyrin-IX biosynthesis; coproporphyrinogen-III from 5-aminolevulinate: step 4/4. In terms of biological role, catalyzes the decarboxylation of four acetate groups of uroporphyrinogen-III to yield coproporphyrinogen-III. The polypeptide is Uroporphyrinogen decarboxylase (Acinetobacter baumannii (strain SDF)).